Here is a 65-residue protein sequence, read N- to C-terminus: uncharacterized protein (65 aa).

2 helical membrane passes run A4–L24 and L39–F59.

It localises to the membrane. This is an uncharacterized protein from Streptococcus pneumoniae serotype 2 (strain D39 / NCTC 7466).